Reading from the N-terminus, the 338-residue chain is Ribonucleoside-diphosphate reductase small subunit (338 aa).

3 residues coordinate Fe cation: D81, E112, and H115. Y119 is an active-site residue. Positions 174, 208, and 211 each coordinate Fe cation.

This sequence belongs to the ribonucleoside diphosphate reductase small chain family. In terms of assembly, heterodimer of a large and a small subunit. The cofactor is Fe cation.

It is found in the cytoplasm. It carries out the reaction a 2'-deoxyribonucleoside 5'-diphosphate + [thioredoxin]-disulfide + H2O = a ribonucleoside 5'-diphosphate + [thioredoxin]-dithiol. In terms of biological role, provides the precursors necessary for DNA synthesis. Catalyzes the biosynthesis of deoxyribonucleotides from the corresponding ribonucleotides. The sequence is that of Ribonucleoside-diphosphate reductase small subunit (rnrB-1) from Dictyostelium discoideum (Social amoeba).